Consider the following 291-residue polypeptide: Transmembrane protein 41B (291 aa).

A compositionally biased stretch (basic and acidic residues) spans 1–11 (MAKGRVADRSP). The interval 1-43 (MAKGRVADRSPTEMLHSTPAGDRAVRTQGSAAPGSKDHLNEKP) is disordered. A Phosphothreonine modification is found at T18. Residue S35 is modified to Phosphoserine. A run of 6 helical transmembrane segments spans residues 52–72 (TSLLILVSIFSCAAFVMFLVY), 109–129 (FYVQVLVAYFATYIFLQTFAI), 147–169 (LALFLVCLCSGLGASFCYMLSYL), 197–217 (LINYIIFLRITPFLPNWFINI), 225–245 (PLKVFFIGTFLGVAPPSFVAI), and 262–282 (SWSSVFILMVLALLSILPAIF). The tract at residues 140 to 251 (GFLYPFPLAL…FVAIKAGTTL (112 aa)) is VTT domain; required for its function in autophagy.

It belongs to the TMEM41 family. Interacts with VMP1. Interacts with COPA, COPB1, VDAC1 and ERLIN2. Interacts with ATG2A. Interacts with SURF4. As to expression, expressed in brain, spinal cord, kidney and first lumbar dorsal root ganglia during postnatal development. Expressed in motor neurons and proprioceptive neurons.

The protein localises to the endoplasmic reticulum membrane. It localises to the endomembrane system. It catalyses the reaction a 1,2-diacyl-sn-glycero-3-phospho-L-serine(in) = a 1,2-diacyl-sn-glycero-3-phospho-L-serine(out). It carries out the reaction cholesterol(in) = cholesterol(out). The enzyme catalyses a 1,2-diacyl-sn-glycero-3-phosphocholine(in) = a 1,2-diacyl-sn-glycero-3-phosphocholine(out). The catalysed reaction is a 1,2-diacyl-sn-glycero-3-phosphoethanolamine(in) = a 1,2-diacyl-sn-glycero-3-phosphoethanolamine(out). In terms of biological role, phospholipid scramblase involved in lipid homeostasis and membrane dynamics processes. Has phospholipid scramblase activity toward cholesterol and phosphatidylserine, as well as phosphatidylethanolamine and phosphatidylcholine. Required for autophagosome formation: participates in early stages of autophagosome biogenesis at the endoplasmic reticulum (ER) membrane by reequilibrating the leaflets of the ER as lipids are extracted by ATG2 (ATG2A or ATG2B) to mediate autophagosome assembly. In addition to autophagy, involved in other processes in which phospholipid scramblase activity is required. Required for normal motor neuron development. This is Transmembrane protein 41B from Mus musculus (Mouse).